We begin with the raw amino-acid sequence, 61 residues long: Small ribosomal subunit protein uS14 (61 aa).

C24, C27, C40, and C43 together coordinate Zn(2+).

Belongs to the universal ribosomal protein uS14 family. Zinc-binding uS14 subfamily. In terms of assembly, part of the 30S ribosomal subunit. Contacts proteins S3 and S10. The cofactor is Zn(2+).

Binds 16S rRNA, required for the assembly of 30S particles and may also be responsible for determining the conformation of the 16S rRNA at the A site. This Anoxybacillus flavithermus (strain DSM 21510 / WK1) protein is Small ribosomal subunit protein uS14.